A 417-amino-acid polypeptide reads, in one-letter code: Serine hydroxymethyltransferase (417 aa).

(6S)-5,6,7,8-tetrahydrofolate-binding positions include leucine 121 and 125–127 (GHL). The residue at position 230 (lysine 230) is an N6-(pyridoxal phosphate)lysine. (6S)-5,6,7,8-tetrahydrofolate is bound at residue 355 to 357 (SPF).

It belongs to the SHMT family. Homodimer. It depends on pyridoxal 5'-phosphate as a cofactor.

It localises to the cytoplasm. It carries out the reaction (6R)-5,10-methylene-5,6,7,8-tetrahydrofolate + glycine + H2O = (6S)-5,6,7,8-tetrahydrofolate + L-serine. It participates in one-carbon metabolism; tetrahydrofolate interconversion. It functions in the pathway amino-acid biosynthesis; glycine biosynthesis; glycine from L-serine: step 1/1. In terms of biological role, catalyzes the reversible interconversion of serine and glycine with tetrahydrofolate (THF) serving as the one-carbon carrier. This reaction serves as the major source of one-carbon groups required for the biosynthesis of purines, thymidylate, methionine, and other important biomolecules. Also exhibits THF-independent aldolase activity toward beta-hydroxyamino acids, producing glycine and aldehydes, via a retro-aldol mechanism. This Marinobacter nauticus (strain ATCC 700491 / DSM 11845 / VT8) (Marinobacter aquaeolei) protein is Serine hydroxymethyltransferase.